A 413-amino-acid chain; its full sequence is NADH:flavin oxidoreductase FG08077 (413 aa).

53–56 (APLC) is a binding site for FMN. Residue Y58 participates in substrate binding. The FMN site is built by A88 and Q130. 211–214 (HAAH) contributes to the substrate binding site. FMN-binding positions include R264 and 370-371 (GR).

This sequence belongs to the NADH:flavin oxidoreductase/NADH oxidase family. NamA subfamily. FMN serves as cofactor.

The protein operates within mycotoxin biosynthesis. Functionally, NADH:flavin oxidoreductase; part of the gene cluster that mediates the biosynthesis of butenolide, a mycotoxin that shows antibiotic activity but does not seem to play a major role in the spread of head blight in wheat. Butenolide is derived from glutamic acid via a 4-acetamido-2-butenoic acid intermediate. The predicted function of the NADH:flavin oxidoreductase FG08077, the cytochrome P450 monooxygenase FG08079, the decarboxylase FG08083, and the putative acetyltransferase FG08082 are consistent with this pathway, however, the respective activities of the butelonide biosynthesis cluster enzymes have still to be experimentally determined. In Gibberella zeae (strain ATCC MYA-4620 / CBS 123657 / FGSC 9075 / NRRL 31084 / PH-1) (Wheat head blight fungus), this protein is NADH:flavin oxidoreductase FG08077.